Reading from the N-terminus, the 1322-residue chain is Serine/threonine-protein phosphatase UIS2 (1322 aa).

The N-terminal stretch at 1 to 22 is a signal peptide; the sequence is MNISKFFLIFIPLVLFKYPANN. The segment at 1–535 is interaction with phosphorylated eIF2alpha; that stretch reads MNISKFFLIF…NELKSTSNAM (535 aa). Basic and acidic residues-rich tracts occupy residues 267 to 279 and 288 to 326; these read EKSAEKYEDKELN and NSKKEQTGNDNVSETKMHKEESSDSSNKTDESNVCKSEN. Disordered stretches follow at residues 267 to 326, 613 to 646, 1066 to 1087, and 1170 to 1196; these read EKSA…KSEN, NTNTDDKNQHNDISTTPINNYTDGNEGNNNSENN, NETPHNSNEILNTNENESIQPN, and EVPDESKEDDNTNSQPEDTIDQENKDD. Positions 631 to 646 are enriched in low complexity; it reads NNYTDGNEGNNNSENN.

Mn(2+) is required as a cofactor.

It carries out the reaction O-phospho-L-seryl-[protein] + H2O = L-seryl-[protein] + phosphate. Protein phosphatase which dephosphorylates 'Ser-59' of translation factor eIF2alpha during the liver stage, thus enabling protein translation. This is Serine/threonine-protein phosphatase UIS2 from Plasmodium berghei (strain Anka).